The primary structure comprises 770 residues: Signal transducer and activator of transcription 3 (770 aa).

Alanine 2 is subject to N-acetylalanine. N6-acetyllysine occurs at positions 49 and 87. An Essential for nuclear import motif is present at residues 150-162; that stretch reads DVRKRVQDLEQKM. Residues 580–670 enclose the SH2 domain; sequence WNEGYIMGFI…DATNILVSPL (91 aa). Allysine; alternate occurs at positions 601, 615, and 631. N6-acetyllysine; alternate is present on residues lysine 601, lysine 615, and lysine 631. Tyrosine 640 carries the phosphotyrosine; by TYK2 modification. At lysine 685 the chain carries Allysine; alternate. The residue at position 685 (lysine 685) is an N6-acetyllysine; alternate. Tyrosine 705 is modified (phosphotyrosine; by FER and PTK6). Lysine 707 is modified (N6-acetyllysine). Position 714 is a phosphothreonine (threonine 714). Serine 727 is subject to Phosphoserine; by DYRK2, NLK, NEK6, IRAK1, RPS6KA5, ZIPK/DAPK3 and PKC/PRKCE.

The protein belongs to the transcription factor STAT family. In terms of assembly, forms a homodimer or a heterodimer with a related family member (at least STAT1). Component of a promoter-binding complex composed of STAT3, NFATC3 and NFATC4; complex formation is enhanced by calcineurin. Interacts with IL31RA, NCOA1, PELP1, SIPAR, SOCS7, STATIP1 and TMF1. Interacts with IL23R in presence of IL23. Interacts (via SH2 domain) with NLK. Interacts with ARL2BP; the interaction is enhanced by LIF and JAK1 expression. Interacts with KPNA4 and KPNA5; KPNA4 may be the primary mediator of nuclear import. Interacts with CAV2; the interaction is increased on insulin-induced tyrosine phosphorylation of CAV2 and leads to STAT3 activation. Interacts with ARL2BP; interaction is enhanced with ARL2. Interacts with NEK6. Binds to CDK9 when activated and nuclear. Interacts with BMX. Interacts with ZIPK/DAPK3. Interacts with PIAS3; the interaction occurs on stimulation by IL6, CNTF or OSM and inhibits the DNA binding activity of STAT3. In prostate cancer cells, interacts with PRKCE and promotes DNA binding activity of STAT3. Interacts with STMN3, antagonizing its microtubule-destabilizing activity. Interacts with the 'Lys-129' acetylated form of BIRC5/survivin. Interacts with FER. Interacts (via SH2 domain) with EIF2AK2/PKR (via the kinase catalytic domain). Interacts with FGFR4. Interacts with INPP5F; the interaction is independent of STAT3 Tyr-705 phosphorylation status. Interacts with OCIAD1 and OCIAD2. Interacts (unphosphorylated or phosphorylated at Ser-727) with PHB1. Interacts and may form heterodimers with NHLH1. Found in a complex with SLC39A6, SLC39A10 and with the 'Ser-727' phosphorylated form of STAT3 throughout mitosis. Interacts (when acetylated) with EP300 (via bromo domain); interaction takes place following STAT3 acetylation by EP300 and promotes enhanceosome assembly. Interacts (when acetylated) with BRD2 (via bromo domain); interaction promotes STAT3 recruitment to chromatin and T-helper Th17 cell differentiation. Interacts with FAM220A/SIPAR; the interaction occurs in both the nucleus and the cytoplasm, is enhanced by IL6 and promotes STAT3 dephosphorylation. Interacts in both unphosphorylated and phosphorylated forms with FAM220A but interacts preferentially in the phosphorylated form in the nucleus. Interacts with PTPN2; the interaction is promoted by FAM220A and leads to STAT3 dephosphorylation which negatively regulates STAT3 transcriptional activator activity. In terms of processing, activated through tyrosine phosphorylation by BMX. Tyrosine phosphorylated in response to IL6, IL11, CNTF, LIF, KITLG/SCF, CSF1, EGF, PDGF, IFN-alpha and OSM. Activated KIT promotes phosphorylation on tyrosine residues and subsequent translocation to the nucleus. Tyrosine phosphorylated in response to constitutively activated FGFR1, FGFR2, FGFR3 and FGFR4. Phosphorylated on serine upon DNA damage, probably by ATM or ATR. Serine phosphorylation is important for the formation of stable DNA-binding STAT3 homodimers and maximal transcriptional activity. ARL2BP may participate in keeping the phosphorylated state of STAT3 within the nucleus. Tyrosine phosphorylated upon stimulation with EGF. Upon LPS challenge, phosphorylated within the nucleus by IRAK1. Phosphorylated on Ser-727 by RPS6KA5. Dephosphorylation on tyrosine residues by PTPN2 negatively regulates IL6/interleukin-6 signaling. Phosphorylation at Tyr-705 by FER, isoform M2 of PKM (PKM2) or PTK6 leads to an increase of its transcriptional activity. Phosphorylation at Tyr-705 is increased in the presence of calcineurin. Phosphorylation at Tyr-640 by TYK2 negatively regulates transcriptional activity. Acetylated on lysine residues by EP300/p300, promoting its activation. Acetylation at Lys-49 and Lys-87 by EP300/p300 promotes its activation. Acetylation at Lys-87 by EP300/p300 promotes its association with BRD2 and recruitment to chromatin. Deacetylated at Lys-49 and Lys-87 by HDAC1. Acetylation at Lys-685 by EP300/p300 promotes its homodimerization and activation. Deacetylated at Lys-685 by HDAC3. Acetylated on lysine residues by CREBBP. Deacetylation by LOXL3 leads to disrupt STAT3 dimerization and inhibit STAT3 transcription activity. Oxidation of lysine residues to allysine on STAT3 preferentially takes place on lysine residues that are acetylated. Post-translationally, some lysine residues are oxidized to allysine by LOXL3, leading to disrupt STAT3 dimerization and inhibit STAT3 transcription activity. Oxidation of lysine residues to allysine on STAT3 preferentially takes place on lysine residues that are acetylated. In terms of tissue distribution, detected in lung, heart, oviduct, ovary, uterus and kidney (at protein level). Expressed in cardiomyocytes (at protein level). Detected in ovary, oviduct, and at lower levels in uterus and lung.

It is found in the cytoplasm. The protein resides in the nucleus. Its function is as follows. Signal transducer and transcription activator that mediates cellular responses to interleukins, KITLG/SCF, LEP and other growth factors. Once activated, recruits coactivators, such as NCOA1 or MED1, to the promoter region of the target gene. May mediate cellular responses to activated FGFR1, FGFR2, FGFR3 and FGFR4. Upon activation of IL6ST/gp130 signaling by interleukin-6 (IL6), binds to the IL6-responsive elements identified in the promoters of various acute-phase protein genes. Activated by IL31 through IL31RA. Acts as a regulator of inflammatory response by regulating differentiation of naive CD4(+) T-cells into T-helper Th17 or regulatory T-cells (Treg): acetylation promotes its transcription activity and cell differentiation while deacetylation and oxidation of lysine residues by LOXL3 inhibits differentiation. Involved in cell cycle regulation by inducing the expression of key genes for the progression from G1 to S phase, such as CCND1. Mediates the effects of LEP on melanocortin production, body energy homeostasis and lactation. May play an apoptotic role by transctivating BIRC5 expression under LEP activation. Cytoplasmic STAT3 represses macroautophagy by inhibiting EIF2AK2/PKR activity. Plays a crucial role in basal beta cell functions, such as regulation of insulin secretion. Following JAK/STAT signaling activation and as part of a complex with NFATC3 and NFATC4, binds to the alpha-beta E4 promoter region of CRYAB and activates transcription in cardiomyocytes. Plays an important role in host defense in methicillin-resistant S.aureus lung infection by regulating the expression of the antimicrobial lectin REG3G. In Rattus norvegicus (Rat), this protein is Signal transducer and activator of transcription 3 (Stat3).